The following is a 634-amino-acid chain: Factor of DNA methylation 5 (634 aa).

A coiled-coil region spans residues 254–469 (IVVDDLANKI…EDTNSALMVK (216 aa)).

Its function is as follows. Acts in association with FDM3 and FDM4 for RNA-directed DNA methylation (RdDM). In Arabidopsis thaliana (Mouse-ear cress), this protein is Factor of DNA methylation 5.